We begin with the raw amino-acid sequence, 156 residues long: Arginine repressor (156 aa).

It belongs to the ArgR family.

Its subcellular location is the cytoplasm. It functions in the pathway amino-acid biosynthesis; L-arginine biosynthesis [regulation]. Regulates arginine biosynthesis genes. The polypeptide is Arginine repressor (Vibrio campbellii (strain ATCC BAA-1116)).